The primary structure comprises 327 residues: Methionyl-tRNA formyltransferase (327 aa).

121–124 (SLLP) contributes to the (6S)-5,6,7,8-tetrahydrofolate binding site.

Belongs to the Fmt family.

The enzyme catalyses L-methionyl-tRNA(fMet) + (6R)-10-formyltetrahydrofolate = N-formyl-L-methionyl-tRNA(fMet) + (6S)-5,6,7,8-tetrahydrofolate + H(+). In terms of biological role, attaches a formyl group to the free amino group of methionyl-tRNA(fMet). The formyl group appears to play a dual role in the initiator identity of N-formylmethionyl-tRNA by promoting its recognition by IF2 and preventing the misappropriation of this tRNA by the elongation apparatus. In Burkholderia multivorans (strain ATCC 17616 / 249), this protein is Methionyl-tRNA formyltransferase.